The sequence spans 223 residues: Neurotrophic factor BDNF precursor form (223 aa).

The N-terminal stretch at 1–5 (SCMKA) is a signal peptide. The propeptide occupies 6-114 (APMKEVSIRG…AANMSMRVRR (109 aa)). Asn107 is a glycosylation site (N-linked (GlcNAc...) asparagine). Intrachain disulfides connect Cys127/Cys194 and Cys172/Cys223.

It belongs to the NGF-beta family.

It is found in the secreted. Its function is as follows. Promotes the survival of neuronal populations that are all located either in the central nervous system or directly connected to it. This Charina bottae (Northern rubber boa) protein is Neurotrophic factor BDNF precursor form (BDNF).